A 66-amino-acid polypeptide reads, in one-letter code: Large ribosomal subunit protein bL33c (66 aa).

It belongs to the bacterial ribosomal protein bL33 family.

The protein localises to the plastid. The protein resides in the chloroplast. The chain is Large ribosomal subunit protein bL33c from Cycas taitungensis (Prince sago).